The primary structure comprises 22 residues: Large ribosomal subunit protein bL32 (22 aa).

Residues Cys1–Glu22 form a disordered region. Over residues Asp13–Glu22 the composition is skewed to low complexity.

The protein belongs to the bacterial ribosomal protein bL32 family.

This chain is Large ribosomal subunit protein bL32 (rpmF), found in Ectopseudomonas mendocina (Pseudomonas mendocina).